We begin with the raw amino-acid sequence, 461 residues long: Fumarate hydratase class II (461 aa).

Substrate-binding positions include 97 to 99, 127 to 130, 137 to 139, and threonine 185; these read SGT, HPND, and SSN. Histidine 186 serves as the catalytic Proton donor/acceptor. Serine 316 is a catalytic residue. Substrate contacts are provided by residues serine 317 and 322 to 324; that span reads KVN.

This sequence belongs to the class-II fumarase/aspartase family. Fumarase subfamily. As to quaternary structure, homotetramer.

The protein resides in the cytoplasm. The catalysed reaction is (S)-malate = fumarate + H2O. It functions in the pathway carbohydrate metabolism; tricarboxylic acid cycle; (S)-malate from fumarate: step 1/1. In terms of biological role, involved in the TCA cycle. Catalyzes the stereospecific interconversion of fumarate to L-malate. This Staphylococcus aureus (strain Mu50 / ATCC 700699) protein is Fumarate hydratase class II.